The chain runs to 95 residues: Large ribosomal subunit protein uL23c (95 aa).

Belongs to the universal ribosomal protein uL23 family. In terms of assembly, part of the 50S ribosomal subunit.

The protein localises to the plastid. Its subcellular location is the chloroplast. In terms of biological role, binds to 23S rRNA. The polypeptide is Large ribosomal subunit protein uL23c (rpl23) (Chlamydomonas reinhardtii (Chlamydomonas smithii)).